We begin with the raw amino-acid sequence, 805 residues long: Probable exo-1,4-beta-xylosidase xlnD (805 aa).

The N-terminal stretch at 1 to 17 is a signal peptide; it reads MAVAALALLALLPQALG. N-linked (GlcNAc...) asparagine glycans are attached at residues Asn20, Asn115, Asn140, Asn235, and Asn244. Residue Asp308 is part of the active site. N-linked (GlcNAc...) asparagine glycans are attached at residues Asn350, Asn383, Asn405, Asn434, Asn445, Asn486, Asn490, Asn622, Asn653, Asn667, Asn689, and Asn711.

The protein belongs to the glycosyl hydrolase 3 family.

Its subcellular location is the secreted. The enzyme catalyses Hydrolysis of (1-&gt;4)-beta-D-xylans, to remove successive D-xylose residues from the non-reducing termini.. The protein operates within glycan degradation; xylan degradation. In terms of biological role, xylan 1,4-beta-xylosidase involved in the hydrolysis of xylan, a major structural heterogeneous polysaccharide found in plant biomass representing the second most abundant polysaccharide in the biosphere, after cellulose. This Aspergillus aculeatus protein is Probable exo-1,4-beta-xylosidase xlnD (xlnD).